Consider the following 192-residue polypeptide: GTP-dependent dephospho-CoA kinase (192 aa).

GTP contacts are provided by D49, V50, V51, D68, K70, and E127.

Belongs to the GTP-dependent DPCK family.

It catalyses the reaction 3'-dephospho-CoA + GTP = GDP + CoA + H(+). The protein operates within cofactor biosynthesis; coenzyme A biosynthesis. Its function is as follows. Catalyzes the GTP-dependent phosphorylation of the 3'-hydroxyl group of dephosphocoenzyme A to form coenzyme A (CoA). The polypeptide is GTP-dependent dephospho-CoA kinase (Halorubrum lacusprofundi (strain ATCC 49239 / DSM 5036 / JCM 8891 / ACAM 34)).